The sequence spans 127 residues: Large-conductance mechanosensitive channel (127 aa).

Helical transmembrane passes span 9-29, 32-52, and 75-95; these read EFAM…GVAF, IVTA…LGGI, and VIDF…INLL.

It belongs to the MscL family. In terms of assembly, homopentamer.

The protein localises to the cell inner membrane. Channel that opens in response to stretch forces in the membrane lipid bilayer. May participate in the regulation of osmotic pressure changes within the cell. In Legionella pneumophila subsp. pneumophila (strain Philadelphia 1 / ATCC 33152 / DSM 7513), this protein is Large-conductance mechanosensitive channel.